Reading from the N-terminus, the 478-residue chain is Glucose-6-phosphate 1-dehydrogenase (478 aa).

Residues Arg-48, 86 to 87 (DF), and Lys-142 contribute to the NADP(+) site. Positions 172, 176, 210, and 229 each coordinate substrate. The Proton acceptor role is filled by His-234. Residues Lys-334 and Lys-339 each contribute to the substrate site.

Belongs to the glucose-6-phosphate dehydrogenase family.

The enzyme catalyses D-glucose 6-phosphate + NADP(+) = 6-phospho-D-glucono-1,5-lactone + NADPH + H(+). It participates in carbohydrate degradation; pentose phosphate pathway; D-ribulose 5-phosphate from D-glucose 6-phosphate (oxidative stage): step 1/3. Catalyzes the oxidation of glucose 6-phosphate to 6-phosphogluconolactone. In Borreliella burgdorferi (strain ATCC 35210 / DSM 4680 / CIP 102532 / B31) (Borrelia burgdorferi), this protein is Glucose-6-phosphate 1-dehydrogenase.